A 102-amino-acid polypeptide reads, in one-letter code: Small ribosomal subunit protein uS10 (102 aa).

This sequence belongs to the universal ribosomal protein uS10 family. As to quaternary structure, part of the 30S ribosomal subunit.

Its function is as follows. Involved in the binding of tRNA to the ribosomes. This is Small ribosomal subunit protein uS10 from Nitrosomonas eutropha (strain DSM 101675 / C91 / Nm57).